Reading from the N-terminus, the 389-residue chain is Chalcone synthase 1 (389 aa).

Cys164 is a catalytic residue.

It belongs to the thiolase-like superfamily. Chalcone/stilbene synthases family.

It catalyses the reaction (E)-4-coumaroyl-CoA + 3 malonyl-CoA + 3 H(+) = 2',4,4',6'-tetrahydroxychalcone + 3 CO2 + 4 CoA. Its pathway is secondary metabolite biosynthesis; flavonoid biosynthesis. Functionally, the primary product of this enzyme is 4,2',4',6'-tetrahydroxychalcone (also termed naringenin-chalcone or chalcone) which can under specific conditions spontaneously isomerize into naringenin. This Pisum sativum (Garden pea) protein is Chalcone synthase 1 (CHS1).